A 278-amino-acid polypeptide reads, in one-letter code: Small ribosomal subunit protein uS2 (278 aa).

Positions 233 to 258 (IDMEAAGEAPANKGKKKSAKARLDKS) are disordered.

Belongs to the universal ribosomal protein uS2 family.

The sequence is that of Small ribosomal subunit protein uS2 from Bacteroides fragilis (strain ATCC 25285 / DSM 2151 / CCUG 4856 / JCM 11019 / LMG 10263 / NCTC 9343 / Onslow / VPI 2553 / EN-2).